A 1612-amino-acid chain; its full sequence is uncharacterized protein (1612 aa).

Positions E23 to N52 form a coiled coil. Over residues I46–H93 the composition is skewed to basic and acidic residues. Disordered regions lie at residues I46–V94 and E369–Q400. The span at D375–L394 shows a compositional bias: polar residues. Residues F479–N499 form a helical membrane-spanning segment. Disordered stretches follow at residues T698–L777, N992–P1037, S1091–S1157, and N1257–K1291. A compositionally biased stretch (basic and acidic residues) spans K708–L777. Low complexity-rich tracts occupy residues N996–N1028, S1102–N1140, and N1257–N1271. Coiled-coil stretches lie at residues Y1338–K1362, S1444–D1469, and N1553–T1601. The span at M1554–E1566 shows a compositional bias: basic and acidic residues. The segment at M1554–K1612 is disordered. Positions G1567–D1597 are enriched in acidic residues.

It localises to the membrane. This is an uncharacterized protein from Plasmodium falciparum (isolate 3D7).